Consider the following 302-residue polypeptide: ATP synthase gamma chain (302 aa).

This sequence belongs to the ATPase gamma chain family. In terms of assembly, F-type ATPases have 2 components, CF(1) - the catalytic core - and CF(0) - the membrane proton channel. CF(1) has five subunits: alpha(3), beta(3), gamma(1), delta(1), epsilon(1). CF(0) has three main subunits: a, b and c.

The protein localises to the cell membrane. Its function is as follows. Produces ATP from ADP in the presence of a proton gradient across the membrane. The gamma chain is believed to be important in regulating ATPase activity and the flow of protons through the CF(0) complex. This is ATP synthase gamma chain from Kineococcus radiotolerans (strain ATCC BAA-149 / DSM 14245 / SRS30216).